The sequence spans 862 residues: DNA topoisomerase 3-beta-1 (862 aa).

Residues 3–153 (TVLMVAEKPS…EKTVFRARFS (151 aa)) enclose the Toprim domain. The region spanning 171–593 (DHNEALSVDA…HTLDIFKRKF (423 aa)) is the Topo IA-type catalytic domain. Tyrosine 336 acts as the O-(5'-phospho-DNA)-tyrosine intermediate in catalysis. Residues 820–855 (HPMHRGGPGRRQGRGRGRGRRPPGKPNPRRPKDKMS) are disordered. Residues 821 to 851 (PMHRGGPGRRQGRGRGRGRRPPGKPNPRRPK) show a composition bias toward basic residues.

Belongs to the type IA topoisomerase family. As to expression, highly expressed in testis.

The catalysed reaction is ATP-independent breakage of single-stranded DNA, followed by passage and rejoining.. Functionally, releases the supercoiling and torsional tension of DNA introduced during the DNA replication and transcription by transiently cleaving and rejoining one strand of the DNA duplex. Introduces a single-strand break via transesterification at a target site in duplex DNA. The scissile phosphodiester is attacked by the catalytic tyrosine of the enzyme, resulting in the formation of a DNA-(5'-phosphotyrosyl)-enzyme intermediate and the expulsion of a 3'-OH DNA strand. The free DNA strand than undergoes passage around the unbroken strand thus removing DNA supercoils. Finally, in the religation step, the DNA 3'-OH attacks the covalent intermediate to expel the active-site tyrosine and restore the DNA phosphodiester backbone. Possesses negatively supercoiled DNA relaxing activity. The polypeptide is DNA topoisomerase 3-beta-1 (Top3b) (Mus musculus (Mouse)).